Consider the following 80-residue polypeptide: MTTTMKIMSFAMLLVLLFSIDVVEGSGSSLCCNTHAKFGACNTYQDRKRCNKWCLDGCDNKKGGFCKRFAGGAKKCHCYC.

Positions 1-25 (MTTTMKIMSFAMLLVLLFSIDVVEG) are cleaved as a signal peptide. Intrachain disulfides connect C31–C80, C41–C66, C50–C76, and C54–C78.

The protein belongs to the DEFL family.

The protein resides in the secreted. The protein is Putative defensin-like protein 23 of Arabidopsis thaliana (Mouse-ear cress).